A 498-amino-acid polypeptide reads, in one-letter code: MASQGTKRSYEQMETDGDRQNATEIRASVGKMIDGIGRFYIQMCTELKLSDYEGRLIQNSLTIERMVLSAFDERRNKYLEEHPSAGKDPKKTGGPIYKRVDGKWMRELVLYDKEEIRRIWRQANNGDDATAGLTHMMIWHSNLNDTTYQRTRALVRTGMDPRMCSLMQGSTLPRRSGAAGAAVKGVGTMVMELIRMIKRGINDRNFWRGENGRKTRIAYERMCNILKGKFQTAAQRAMMDQVRESRNPGNAEIEDLIFLARSALILRGSVAHKSCLPACVYGPAVASGYDFEKEGYSLVGIDPFKLLQNSQVYSLIRPNENPAHKSQLVWMACNSAAFEDLRVSSFIRGTKVIPRGKLSTRGVQIASNENMDTMGSSTLELRSRYWAIRTRSGGNTNQQRASAGQISIQPTFSVQRNLPFDKTTIMAAFTGNAEGRTSDMRAEIIRMMESARPEEVSFQGRGVFELSDERAANPIVPSFDMSNEGSYFFGDNAEEYDN.

Positions 1–18 (MASQGTKRSYEQMETDGD) match the Unconventional nuclear localization signal motif. Positions 1-22 (MASQGTKRSYEQMETDGDRQNA) are disordered. A compositionally biased stretch (basic and acidic residues) spans 8 to 21 (RSYEQMETDGDRQN). The Bipartite nuclear localization signal motif lies at 198–216 (KRGINDRNFWRGENGRKTR).

This sequence belongs to the influenza viruses nucleoprotein family. In terms of assembly, homomultimerizes to form the nucleocapsid. May bind host exportin-1/XPO1. Binds to viral genomic RNA. Protein-RNA contacts are mediated by a combination of electrostatic interactions between positively charged residues and the phosphate backbone and planar interactions between aromatic side chains and bases. In terms of processing, late in virus-infected cells, may be cleaved from a 56-kDa protein to a 53-kDa protein by a cellular caspase. This cleavage might be a marker for the onset of apoptosis in infected cells or have a specific function in virus host interaction.

It localises to the virion. The protein resides in the host nucleus. Functionally, encapsidates the negative strand viral RNA, protecting it from nucleases. The encapsidated genomic RNA is termed the ribonucleoprotein (RNP) and serves as template for transcription and replication. The RNP needs to be localized in the host nucleus to start an infectious cycle, but is too large to diffuse through the nuclear pore complex. NP comprises at least 2 nuclear localization signals that are responsible for the active RNP import into the nucleus through cellular importin alpha/beta pathway. Later in the infection, nclear export of RNPs are mediated through viral proteins NEP interacting with M1 which binds nucleoproteins. It is possible that nucleoprotein binds directly host exportin-1/XPO1 and plays an active role in RNPs nuclear export. M1 interaction with RNP seems to hide nucleoprotein's nuclear localization signals. Soon after a virion infects a new cell, M1 dissociates from the RNP under acidification of the virion driven by M2 protein. Dissociation of M1 from RNP unmasks nucleoprotein's nuclear localization signals, targeting the RNP to the nucleus. The polypeptide is Nucleoprotein (Influenza A virus (strain A/Fort Warren/1/1950 H1N1)).